Consider the following 418-residue polypeptide: Gamma-glutamyl phosphate reductase (418 aa).

Belongs to the gamma-glutamyl phosphate reductase family.

It is found in the cytoplasm. The catalysed reaction is L-glutamate 5-semialdehyde + phosphate + NADP(+) = L-glutamyl 5-phosphate + NADPH + H(+). It functions in the pathway amino-acid biosynthesis; L-proline biosynthesis; L-glutamate 5-semialdehyde from L-glutamate: step 2/2. In terms of biological role, catalyzes the NADPH-dependent reduction of L-glutamate 5-phosphate into L-glutamate 5-semialdehyde and phosphate. The product spontaneously undergoes cyclization to form 1-pyrroline-5-carboxylate. In Chlorobium chlorochromatii (strain CaD3), this protein is Gamma-glutamyl phosphate reductase.